A 118-amino-acid chain; its full sequence is MARIAGINIPDQKHAVIALTAIYGIGKTRSKAILADVGIAEDVKISELTEEQIDQLRDGVAKYTVEGDLRREVSMNIKRLMDLGCYRGLRHRRSLPLRGQRTKTNARTRKGPRKPIKK.

The interval 94-118 (SLPLRGQRTKTNARTRKGPRKPIKK) is disordered.

It belongs to the universal ribosomal protein uS13 family. Part of the 30S ribosomal subunit. Forms a loose heterodimer with protein S19. Forms two bridges to the 50S subunit in the 70S ribosome.

Functionally, located at the top of the head of the 30S subunit, it contacts several helices of the 16S rRNA. In the 70S ribosome it contacts the 23S rRNA (bridge B1a) and protein L5 of the 50S subunit (bridge B1b), connecting the 2 subunits; these bridges are implicated in subunit movement. Contacts the tRNAs in the A and P-sites. In Vibrio vulnificus (strain CMCP6), this protein is Small ribosomal subunit protein uS13.